The chain runs to 337 residues: Viral cathepsin (337 aa).

The N-terminal stretch at 1 to 19 (MTLLMIFTILLVASSQIEG) is a signal peptide. Positions 20 to 126 (HLKFDIHDAQ…DAPPDVHDEL (107 aa)) are cleaved as a propeptide — activation peptide. Intrachain disulfides connect C147–C188, C181–C221, and C276–C324. The active site involves C150. An N-linked (GlcNAc...) asparagine; by host glycan is attached at N172. Catalysis depends on residues H283 and N303.

This sequence belongs to the peptidase C1 family. Post-translationally, synthesized as an inactive proenzyme and activated by proteolytic removal of the inhibitory propeptide.

The enzyme catalyses Endopeptidase of broad specificity, hydrolyzing substrates of both cathepsin L and cathepsin B.. Functionally, cysteine protease that plays an essential role in host liquefaction to facilitate horizontal transmission of the virus. May participate in the degradation of foreign protein expressed by the baculovirus system. In Adoxophyes honmai (Smaller tea tortrix moth), this protein is Viral cathepsin (VCATH).